The sequence spans 410 residues: Multifunctional CCA protein (410 aa).

Gly-8 and Arg-11 together coordinate ATP. Positions 8 and 11 each coordinate CTP. 2 residues coordinate Mg(2+): Glu-21 and Asp-23. The ATP site is built by Arg-91, Arg-137, and Arg-140. Arg-91, Arg-137, and Arg-140 together coordinate CTP. One can recognise an HD domain in the interval 228-329 (TGVHVLSVLR…LELLQRFDVF (102 aa)).

This sequence belongs to the tRNA nucleotidyltransferase/poly(A) polymerase family. Bacterial CCA-adding enzyme type 1 subfamily. As to quaternary structure, monomer. Can also form homodimers and oligomers. The cofactor is Mg(2+). Ni(2+) is required as a cofactor.

It carries out the reaction a tRNA precursor + 2 CTP + ATP = a tRNA with a 3' CCA end + 3 diphosphate. It catalyses the reaction a tRNA with a 3' CCA end + 2 CTP + ATP = a tRNA with a 3' CCACCA end + 3 diphosphate. In terms of biological role, catalyzes the addition and repair of the essential 3'-terminal CCA sequence in tRNAs without using a nucleic acid template. Adds these three nucleotides in the order of C, C, and A to the tRNA nucleotide-73, using CTP and ATP as substrates and producing inorganic pyrophosphate. tRNA 3'-terminal CCA addition is required both for tRNA processing and repair. Also involved in tRNA surveillance by mediating tandem CCA addition to generate a CCACCA at the 3' terminus of unstable tRNAs. While stable tRNAs receive only 3'-terminal CCA, unstable tRNAs are marked with CCACCA and rapidly degraded. The polypeptide is Multifunctional CCA protein (Ectopseudomonas mendocina (strain ymp) (Pseudomonas mendocina)).